Here is a 375-residue protein sequence, read N- to C-terminus: Actin-binding Rho-activating protein (375 aa).

The segment at 37-101 is disordered; that stretch reads ANENSTRQAQ…ATEVSHIKRK (65 aa). The segment covering 80 to 101 has biased composition (basic and acidic residues); it reads PDGDREGRGSEEATEVSHIKRK. Phosphoserine occurs at positions 150 and 182. Residues 175–197 are disordered; that stretch reads EPKWKSDSIDTEDSGYGGDMEER. Actin-binding stretches follow at residues 193-293 and 294-375; these read DMEE…AERA and KRAE…TLLE. 2 interaction with actin regions span residues 234 to 279 and 346 to 375; these read SQVD…GDEG and MRAR…TLLE.

In terms of assembly, binds F-actin and ABLIM1, ABLIM2 and ABLIM3. Interaction with ABLIM2 and ABLIM3 enhances activity. Predominantly expressed in heart and skeletal muscle, and expressed at lower levels in adrenal gland, brain, kidney, liver, and testis.

The protein localises to the cytoplasm. The protein resides in the myofibril. It is found in the sarcomere. Its subcellular location is the cytoskeleton. In terms of biological role, acts as an activator of serum response factor (SRF)-dependent transcription possibly by inducing nuclear translocation of MKL1 or MKL2 and through a mechanism requiring Rho-actin signaling. The chain is Actin-binding Rho-activating protein from Rattus norvegicus (Rat).